Consider the following 108-residue polypeptide: UPF0251 protein PF0620 (108 aa).

Belongs to the UPF0251 family.

The chain is UPF0251 protein PF0620 from Pyrococcus furiosus (strain ATCC 43587 / DSM 3638 / JCM 8422 / Vc1).